We begin with the raw amino-acid sequence, 231 residues long: uncharacterized protein (231 aa).

A helical transmembrane segment spans residues 10 to 30; that stretch reads SQNIFFIAIVIFILSSVILYH.

The protein resides in the membrane. This is an uncharacterized protein from Rickettsia prowazekii (strain Madrid E).